Consider the following 620-residue polypeptide: MSFDIAKYPTLALVDSTQELRLLPKESLPKLCDELRRYLLDSVSRSSGHFASGLGTVELTVALHYVYNTPFDRLIWDVGHQAYPHKILTGRRDKIGTIRQKGGLHPFPWRGESEYDVLSVGHSSTSISAGIGVAIAAAKEDKQRRAVCVIGDGAITAGMAFEAMNHAGDIKPDLLVVLNDNEMSISENVGALNNHLAQLLSGKLYSTLREGGKKVFSGVPPIKELLKRTEEHIKGMVVPGTLFEELGFNYIGPVDGHDVLGLVSTLKNMRDLKGPQFLHIMTKKGRGYEPAEKDPITFHAVPKFDHTSGVLPKSSGGLPSYSKIFGDWLCETAAKDSKLMAITPAMREGSGMVEFSKKFPDQYFDVAIAEQHAVTFAAGLAIGDYKPVVAIYSTFLQRAYDQVIHDVAIQKLPVLFAIDRAGIVGADGQTHQGAFDLSFLRCIPDMVVMTPSDENECRQMLHTGYHYSDGPCAVRYPRGSGTGATLEPLASLPIGKGVVKRQGEKIAILNFGTLLPEAAAVADKLNATLVDMRFVKPLDTALILQLAGEHDALVTLEENAIMGGAGSGVNEVLMAHRRAVPVLNIGLPDYFIPQGTQEEIRADLGLDAAGIEAKIHDWLA.

Thiamine diphosphate contacts are provided by residues H80 and 121 to 123; that span reads GHS. D152 provides a ligand contact to Mg(2+). Residues 153–154, N181, Y288, and E370 contribute to the thiamine diphosphate site; that span reads GA. N181 is a binding site for Mg(2+).

This sequence belongs to the transketolase family. DXPS subfamily. As to quaternary structure, homodimer. It depends on Mg(2+) as a cofactor. Requires thiamine diphosphate as cofactor.

It catalyses the reaction D-glyceraldehyde 3-phosphate + pyruvate + H(+) = 1-deoxy-D-xylulose 5-phosphate + CO2. It functions in the pathway metabolic intermediate biosynthesis; 1-deoxy-D-xylulose 5-phosphate biosynthesis; 1-deoxy-D-xylulose 5-phosphate from D-glyceraldehyde 3-phosphate and pyruvate: step 1/1. Functionally, catalyzes the acyloin condensation reaction between C atoms 2 and 3 of pyruvate and glyceraldehyde 3-phosphate to yield 1-deoxy-D-xylulose-5-phosphate (DXP). The protein is 1-deoxy-D-xylulose-5-phosphate synthase of Klebsiella pneumoniae (strain 342).